The primary structure comprises 178 residues: Glutamyl-tRNA(Gln) amidotransferase subunit C, mitochondrial (178 aa).

A mitochondrion-targeting transit peptide spans 1 to 31; sequence MFRHIFTLGPRSISAITVRSRRALSSTAKPV. Residues 26–67 are disordered; the sequence is STAKPVSAPVTSDDRPNLDVKHLKHPTKVPQQPHKSDIDRRQ. Residues 37 to 46 are compositionally biased toward basic and acidic residues; sequence SDDRPNLDVK.

This sequence belongs to the GatC family. Subunit of the heterotrimeric GatCAB amidotransferase (AdT) complex, composed of A, B and C subunits.

It is found in the mitochondrion. It catalyses the reaction L-glutamyl-tRNA(Gln) + L-glutamine + ATP + H2O = L-glutaminyl-tRNA(Gln) + L-glutamate + ADP + phosphate + H(+). Its function is as follows. Allows the formation of correctly charged Gln-tRNA(Gln) through the transamidation of misacylated Glu-tRNA(Gln) in the mitochondria. The reaction takes place in the presence of glutamine and ATP through an activated gamma-phospho-Glu-tRNA(Gln). The polypeptide is Glutamyl-tRNA(Gln) amidotransferase subunit C, mitochondrial (Aedes aegypti (Yellowfever mosquito)).